We begin with the raw amino-acid sequence, 1865 residues long: Dedicator of cytokinesis protein 1 (1865 aa).

The SH3 domain maps to 9 to 70 (REEKYGVAFY…PASYIHLKEA (62 aa)). The C2 DOCK-type domain maps to 425 to 609 (RNDIYVTLVQ…DSFQISTLVC (185 aa)). The region spanning 1207-1617 (YKEIEREEMY…VEKEYGVRIM (411 aa)) is the DOCKER domain. 2 disordered regions span residues 1619–1716 (SSLD…EFKP) and 1732–1865 (TISP…GIVQ). The span at 1639 to 1666 (PSSSRPLSVASVSSLSSDSTPSRPGSDG) shows a compositional bias: low complexity. The segment covering 1680–1694 (RSQDKLDKDDLEKEK) has biased composition (basic and acidic residues). Ser-1681 is subject to Phosphoserine. A phosphoinositide-binding region spans residues 1687–1695 (KDDLEKEKK). A compositionally biased stretch (basic residues) spans 1695–1704 (KDKKKEKRNS). A compositionally biased stretch (basic and acidic residues) spans 1705–1716 (KHQEIFEKEFKP). A phosphoserine mark is found at Ser-1743, Ser-1751, Ser-1756, Ser-1761, and Ser-1764. The segment covering 1756–1766 (SVSPSSPSSQQ) has biased composition (low complexity). Residues Thr-1767 and Thr-1772 each carry the phosphothreonine modification. Residues 1793–1819 (ADVADVPPPLPLKGSVADYGNLMENQD) are interaction with NCK2 second and third SH3 domain (minor). Residues 1799–1805 (PPPLPLK) carry the SH3-binding; interaction with CRK motif. The interval 1820–1836 (LLGSPTPPPPPPHQRHL) is interaction with NCK2 third SH3 domain (major). Over residues 1824 to 1851 (PTPPPPPPHQRHLPPPLPSKTPPPPPPK) the composition is skewed to pro residues. Positions 1837–1852 (PPPLPSKTPPPPPPKT) are interaction with NCK2 (minor). Positions 1838–1843 (PPLPSK) match the SH3-binding; interaction with CRK motif. Residues 1855-1865 (KQASVDSGIVQ) show a composition bias toward polar residues. Residue Ser-1858 is modified to Phosphoserine.

It belongs to the DOCK family. As to quaternary structure, interacts with the SH3 domains of CRK and NCK2 via multiple sites. Interacts with nucleotide-free RAC1 via its DOCKER domain. Interacts with ELMO1, ELMO2 and probably ELMO3 via its SH3 domain. Interacts with ADGRB1. Identified in a complex with AUTS2 and ELMO2. Highly expressed in placenta, lung, kidney, pancreas and ovary. Expressed at intermediate level in thymus, testes and colon.

It is found in the cytoplasm. The protein resides in the membrane. Functionally, involved in cytoskeletal rearrangements required for phagocytosis of apoptotic cells and cell motility. Along with DOCK1, mediates CRK/CRKL regulation of epithelial and endothelial cell spreading and migration on type IV collagen. Functions as a guanine nucleotide exchange factor (GEF), which activates Rac Rho small GTPases by exchanging bound GDP for free GTP. Its GEF activity may be enhanced by ELMO1. This chain is Dedicator of cytokinesis protein 1 (DOCK1), found in Homo sapiens (Human).